Consider the following 208-residue polypeptide: uncharacterized protein (208 aa).

4Fe-4S ferredoxin-type domains lie at 59-88, 114-145, 147-176, and 174-203; these read GVLVTQRARCTGCHRCEISCTNFNDGSVGT, GDLNYTADTCRQCKEPQCMNVCPIGAITWQQK, GCITVDHKRCIGCSACTTACPWMMATVNTE, and NTESKKSSKCVLCGECANACPTGALKIIEW. [4Fe-4S] cluster contacts are provided by cysteine 68, cysteine 71, cysteine 74, cysteine 78, cysteine 123, cysteine 126, cysteine 131, cysteine 135, cysteine 156, cysteine 159, cysteine 162, cysteine 166, cysteine 183, cysteine 186, cysteine 189, and cysteine 193.

This is an uncharacterized protein from Escherichia coli O157:H7.